We begin with the raw amino-acid sequence, 282 residues long: Proteasome subunit beta (282 aa).

Residues 1–55 (MDNSSTGRYPAASLPPAYLRPGSSSFTDFLRAQAPELLPTARSFPEGSVVQAAHG) constitute a propeptide, removed in mature form; by autocatalysis. The active-site Nucleophile is T56.

The protein belongs to the peptidase T1B family. As to quaternary structure, the 20S proteasome core is composed of 14 alpha and 14 beta subunits that assemble into four stacked heptameric rings, resulting in a barrel-shaped structure. The two inner rings, each composed of seven catalytic beta subunits, are sandwiched by two outer rings, each composed of seven alpha subunits. The catalytic chamber with the active sites is on the inside of the barrel. Has a gated structure, the ends of the cylinder being occluded by the N-termini of the alpha-subunits. Is capped by the proteasome-associated ATPase, ARC.

Its subcellular location is the cytoplasm. It catalyses the reaction Cleavage of peptide bonds with very broad specificity.. The protein operates within protein degradation; proteasomal Pup-dependent pathway. Its activity is regulated as follows. The formation of the proteasomal ATPase ARC-20S proteasome complex, likely via the docking of the C-termini of ARC into the intersubunit pockets in the alpha-rings, may trigger opening of the gate for substrate entry. Interconversion between the open-gate and close-gate conformations leads to a dynamic regulation of the 20S proteasome proteolysis activity. Component of the proteasome core, a large protease complex with broad specificity involved in protein degradation. The chain is Proteasome subunit beta from Actinosynnema mirum (strain ATCC 29888 / DSM 43827 / JCM 3225 / NBRC 14064 / NCIMB 13271 / NRRL B-12336 / IMRU 3971 / 101).